Consider the following 484-residue polypeptide: uncharacterized protein (484 aa).

The chain crosses the membrane as a helical span at residues 25 to 45 (PLSLFVVLAAVPLPIYFSGLL). Residues 384–419 (LSFEETKELWVRADLDGNGVFDYEELKKIWNMTMVN) form the EF-hand domain. Asp397, Asp399, Asn401, and Glu408 together coordinate Ca(2+).

It is found in the membrane. This is an uncharacterized protein from Arabidopsis thaliana (Mouse-ear cress).